The primary structure comprises 54 residues: Apelin receptor early endogenous ligand (54 aa).

A signal peptide spans 1-22 (MRFQQFLFAFFIFIMSLLLISG). N27 is a glycosylation site (N-linked (GlcNAc...) asparagine).

Belongs to the Elabela/Toddler family. Interacts with APLNR. Expressed in the intima of blood vessels. Expressed in endothelial cells in blood vessels in the heart and lung. Expressed in cytotrophoblasts and syncytiotrophoblasts of first-trimester placental tissue and term placentas (at protein level). Not detected in smooth muscle cells or cardiomyocytes (at protein level). Expressed in kidney. Expressed in blood vessels. Expressed in embryonic (ESCs) and induced (iPSCs) pluripotent stem cells. Most highly expressed in undifferentiated embryonic stem cell and is rapidly down-regulated during differentiation.

It is found in the secreted. It localises to the extracellular space. Its function is as follows. Peptide hormone that functions as endogenous ligand for the G-protein-coupled apelin receptor (APLNR/APJ), that plays a role in the regulation of normal cardiovascular function and fluid homeostasis. Functions as a balanced agonist activating both G(i) protein pathway and beta-arrestin pathway of APLNR. Downstream G proteins activation, apelin can inhibit cAMP production and activate key intracellular effectors such as ERKs. On the other hand, APLNR activation induces beta-arrestin recruitment to the membrane leading to desensitization and internalization of the receptor. Required for mesendodermal differentiation, blood vessels formation and heart morphogenesis during early development and for adult cardiovascular homeostasis. Acts as a motogen by promoting mesendodermal cell migration during gastrulation by binding and activating APLNR. Acts as an early embryonic regulator of cellular movement with a role in migration and development of cardiac progenitor cells. May act as a chemoattractant for the activation of angioblast migration toward the embryonic midline, i.e. the position of the future vessel formation, during vasculogenesis. Positively regulates sinus venosus (SV)-derived endothelial cells migration into the developing heart to promote coronary blood vessel sprouting. Plays a role in placental vascular development; promotes placental trophoblast invasion and spiral artery remodeling in the uterus. Involved in the regulation of maternal cardiovascular homeostasis to prevent gestational hypertension and for potent cardioprotective functions during heart failure. Mediates myocardial contractility in an ERK1/2-dependent manner. The sequence is that of Apelin receptor early endogenous ligand from Homo sapiens (Human).